A 216-amino-acid chain; its full sequence is Soluble inorganic pyrophosphatase 4 (216 aa).

Residue S18 is modified to Phosphoserine. Residues K66 and R80 each contribute to the substrate site. Y88 acts as the Proton donor in catalysis. Residue Y92 participates in substrate binding. Mg(2+)-binding residues include D102, D107, and D139. Y176 contributes to the substrate binding site.

It belongs to the PPase family. In terms of assembly, monomer. The cofactor is Mg(2+). In terms of tissue distribution, ubiquitous, excepted in pollen. Very low expression in cork, xylem and hypocotyls.

The protein localises to the cytoplasm. The catalysed reaction is diphosphate + H2O = 2 phosphate + H(+). Inhibited by Zn(2+), Ca(2+), Ba(2+), Fe(2+), Co(2+), Cu(2+), Eu(2+), Eu(3+) and Mn(2+). In terms of biological role, catalyzes the irreversible hydrolysis of pyrophosphate (PPi) to phosphate. The MgPPi(2-) complex binds to the enzyme only after a free Mg(2+) ion has bound. No activity with glycerol-3-phosphate, glucose-6-phosphate, p-nitrophenylphosphate, ADP, NADP(+), NAD(+),NADH, NADPH or phosphoribosyl pyrophosphate as substrates. The protein is Soluble inorganic pyrophosphatase 4 of Arabidopsis thaliana (Mouse-ear cress).